A 580-amino-acid polypeptide reads, in one-letter code: MTAVAPRVDGHVAPQRPEPTGHARKGSKAWLMMTTTDHKQLGIMYIIMSFSFFFLGGLMALLIRAELFTPGLQFLSNEQFNQLFTMHGTVMLLLYGTPIVWGFANYVLPLQIGAPDVAFPRLNAFGFWITTVGGVAMLAGFLTPGGAADFGWTMYSPLSDSIHSPGIGSDMWIIGVGATGIGSVASAINMLTTILCLRAPGMTMFRMPVFTWNIFVTSVLALLIFPLLLAAALGVLYDRKLGGHIYDPANGGSILWQHLFWFFGHPEVYVLALPFFGIISEIIPVFSRKPMFGYIGLVFATLSIGALSMAVWAHHMFVTGAVLLPFFSFMTFLISVPTGVKFFNWVGTMWKGHITWETPMIWAVGFMSTFLFGGLTGIMLASPPLDFHLSDSYFLIAHFHYTLFGTVVFASCAGVYFWFPKMTGRMMDERLGKIHFWLTFVGFHGTFMVQHWLGNMGMPRRYADYLDSDGFTTLNQISTIFSFLLGLSVIPFVWNVFKSWRYGELVTVDDPWGYGNSLEWATSCPPPRHNFTSLPRIRSERPAFELHYPHMIERMRREAHVGEHDLRAETTQSPTPAEVR.

The interval 1 to 25 (MTAVAPRVDGHVAPQRPEPTGHARK) is disordered. Residues 43–63 (IMYIIMSFSFFFLGGLMALLI) form a helical membrane-spanning segment. His87 lines the Fe(II)-heme a pocket. A run of 6 helical transmembrane segments spans residues 90–110 (VMLL…VLPL), 122–142 (LNAF…AGFL), 171–191 (MWII…INML), 214–234 (IFVT…AALG), 259–279 (LFWF…FGII), and 292–312 (FGYI…MAVW). Residues His265 and Tyr269 each coordinate Cu cation. A cross-link (1'-histidyl-3'-tyrosine (His-Tyr)) is located at residues 265 to 269 (HPEVY). Cu cation is bound by residues His314 and His315. A run of 2 helical transmembrane segments spans residues 316–336 (MFVT…LISV) and 360–380 (MIWA…GIML). A heme a3-binding site is contributed by His398. 3 helical membrane passes run 399–419 (FHYT…YFWF), 434–454 (IHFW…HWLG), and 477–497 (ISTI…WNVF). A Fe(II)-heme a-binding site is contributed by His400.

Belongs to the heme-copper respiratory oxidase family. In terms of assembly, associates with subunits II, III and IV to form cytochrome c oxidase. Requires Cu(2+) as cofactor. Heme serves as cofactor.

Its subcellular location is the cell membrane. The catalysed reaction is 4 Fe(II)-[cytochrome c] + O2 + 8 H(+)(in) = 4 Fe(III)-[cytochrome c] + 2 H2O + 4 H(+)(out). Its pathway is energy metabolism; oxidative phosphorylation. Functionally, cytochrome c oxidase is the component of the respiratory chain that catalyzes the reduction of oxygen to water. Subunits 1-3 form the functional core of the enzyme complex. CO I is the catalytic subunit of the enzyme. Electrons originating in cytochrome c are transferred via the copper A center of subunit 2 and heme A of subunit 1 to the bimetallic center formed by heme A3 and copper B. This chain is Cytochrome c oxidase subunit 1 (ctaD), found in Corynebacterium efficiens (strain DSM 44549 / YS-314 / AJ 12310 / JCM 11189 / NBRC 100395).